Consider the following 58-residue polypeptide: Large ribosomal subunit protein eL24 (58 aa).

Zn(2+)-binding residues include Cys6, Cys9, Cys32, and Cys36. Residues 6-36 (CAFCGADILPGYGIMYVKTDGTTLRFCSRKC) form a C4-type zinc finger.

It belongs to the eukaryotic ribosomal protein eL24 family. In terms of assembly, part of the 50S ribosomal subunit. Forms a cluster with proteins L3 and L14. The cofactor is Zn(2+).

Functionally, binds to the 23S rRNA. This is Large ribosomal subunit protein eL24 from Pyrobaculum islandicum (strain DSM 4184 / JCM 9189 / GEO3).